We begin with the raw amino-acid sequence, 309 residues long: Cutinase (309 aa).

An N-terminal signal peptide occupies residues Met1–Ala47. Catalysis depends on Ser178, which acts as the Nucleophile. Residues Asp224 and His256 each act as charge relay system in the active site. Cysteines 289 and 305 form a disulfide.

It belongs to the AB hydrolase superfamily.

The protein resides in the secreted. The catalysed reaction is a carboxylic ester + H2O = an alcohol + a carboxylate + H(+). The enzyme catalyses a triacylglycerol + H2O = a diacylglycerol + a fatty acid + H(+). It catalyses the reaction 1,2,3-tri-(9Z-octadecenoyl)-glycerol + H2O = di-(9Z)-octadecenoylglycerol + (9Z)-octadecenoate + H(+). It carries out the reaction (6-hydroxyhexanoyl)(n) + H2O = (6-hydroxyhexanoyl)(n-1) + 6-hydroxyhexanoate + H(+). The catalysed reaction is cutin + H2O = cutin monomers.. With respect to regulation, no effect on activity by SDS or chelating agents ethylenediaminetetraacetic acid (EDTA) or sodium citrate. No effect on activity by metal ions Ag(+), Ba(2+), Ca(2+), Co(2+), Cu(2+), Mn(2+), Ni(2+), Pb(2+) or Zn(2+). Activated by 1 mM digitonin and sodium deoxycholate, and reducing agents 1 mM 1,4-dithiothreitol, beta-mercaptoethanol and ascorbic acid. Activated by benzene, n-hexane, p-xylene and toluene. Activated by Fe(3+). Inhibited slightly by 1 mM of different chain length fatty acids, and only marginally by 6.0 M urea. Inhibited strongly with chemical modification by reagents phenyl methyl sulfonylfluorid (PMSF), 1-ethyl-3-(3-dimethylaminopropyl) carbodiimide (EDAC), diethylpyrocarbonate (DEPC) and N-bromosuccinimide (NBS). Inhibited by pyridine, DMSO, t-butanol and dodecane. Inhibited by Li(+), Hg(2+) and Mg(2+). No inhibition with chemical modification by reagents N-acetylimidazole (NAI), citraconic anhydride (CA), iodoacetate (IA) and phenylglyoxal (PG). Functionally, catalyzes the hydrolysis of cutin, a polyester that forms the structure of plant cuticle. Shows esterase activity towards p-nitrophenol-linked aliphatic esters (pNP-aliphatic esters). Has a preference for medium chain length (C-4 to C-12) fatty acid esters. Active with p-nitrophenyl palmitate (p-NPP) as substrate. Hydrolyzes triacylglycerol substrates non-specifically with a preference for long, unsaturated fatty acyl chains with the highest activity for triolein. Substrates with cis-9 unsaturation are preferred over the saturated triacylglycerols. Hydrolyzes a wide range of natural oils, especially olive oil, with relatively high activity. Capable of catalyzing synthesis of the flavor ester isoamyl acetate by esterification of isoamyl alcohol using acetic acid as an acyl donor. Degrades synthetic aliphatic polyesters, namely poly(1,4-butylene succinate) extended with 1,6-diisocyanatohexane (PBSc-D) and poly(epsilon-caprolactone) (PCL) plastics. Does not degrade poly(lactic acid) (PLA) nor aromatic poly(ethylene terephthalate) (PET), the most abundant polyester plastic in the world. The chain is Cutinase from Amycolatopsis mediterranei (strain S699) (Nocardia mediterranei).